Here is a 519-residue protein sequence, read N- to C-terminus: Sodium-dependent dicarboxylate transporter SdcS (519 aa).

The next 14 helical transmembrane spans lie at 29 to 49, 59 to 79, 103 to 123, 136 to 156, 159 to 179, 201 to 221, 241 to 261, 297 to 317, 322 to 342, 362 to 382, 395 to 415, 428 to 448, 451 to 471, and 490 to 510; these read VGQL…LLLF, VFVL…AIPI, AQYG…AIAM, IINT…IATG, SMFV…LAII, ALVL…LIGT, FAKW…LVWI, KVVL…EFLL, FTSE…LFLI, LPWG…GISE, LIEG…VLFL, ILPI…LLMV, AMAA…AIVF, and LLSI…VLGI.

The protein belongs to the SLC13A/DASS transporter (TC 2.A.47) family. NADC subfamily.

The protein localises to the cell membrane. Functionally, mediates the transport of dicarboxylates across the cytoplasmic membrane via a Na(+)-electrochemical gradient. The polypeptide is Sodium-dependent dicarboxylate transporter SdcS (sdcS) (Staphylococcus saprophyticus subsp. saprophyticus (strain ATCC 15305 / DSM 20229 / NCIMB 8711 / NCTC 7292 / S-41)).